The chain runs to 108 residues: uncharacterized protein (108 aa).

A helical transmembrane segment spans residues 7 to 27; that stretch reads FIPMLLVANAAPYFFYPIFML.

It to N.crassa NCU05373.1.

Its subcellular location is the membrane. This is an uncharacterized protein from Schizosaccharomyces pombe (strain 972 / ATCC 24843) (Fission yeast).